A 379-amino-acid polypeptide reads, in one-letter code: Pectin lyase A (379 aa).

An N-terminal signal peptide occupies residues 1 to 20; it reads MKTTFLVSLATAALSSTAAA. 2 disulfides stabilise this stretch: C83-C102 and C92-C226. The active site involves R256. The cysteines at positions 323 and 331 are disulfide-linked.

It belongs to the polysaccharide lyase 1 family.

The protein resides in the secreted. The catalysed reaction is Eliminative cleavage of (1-&gt;4)-alpha-D-galacturonan methyl ester to give oligosaccharides with 4-deoxy-6-O-methyl-alpha-D-galact-4-enuronosyl groups at their non-reducing ends.. Its function is as follows. Pectinolytic enzymes consist of four classes of enzymes: pectin lyase, polygalacturonase, pectin methylesterase and rhamnogalacturonase. Among pectinolytic enzymes, pectin lyase is the most important in depolymerization of pectin, since it cleaves internal glycosidic bonds of highly methylated pectins. The protein is Pectin lyase A (pelA) of Emericella nidulans (strain FGSC A4 / ATCC 38163 / CBS 112.46 / NRRL 194 / M139) (Aspergillus nidulans).